A 428-amino-acid polypeptide reads, in one-letter code: Trigger factor (428 aa).

Positions 166-250 constitute a PPIase FKBP-type domain; that stretch reads GDIVTFDFKG…IKNIKEKILP (85 aa).

Belongs to the FKBP-type PPIase family. Tig subfamily.

It localises to the cytoplasm. It catalyses the reaction [protein]-peptidylproline (omega=180) = [protein]-peptidylproline (omega=0). Involved in protein export. Acts as a chaperone by maintaining the newly synthesized protein in an open conformation. Functions as a peptidyl-prolyl cis-trans isomerase. This chain is Trigger factor, found in Mycoplasma capricolum subsp. capricolum (strain California kid / ATCC 27343 / NCTC 10154).